The sequence spans 109 residues: Ribonuclease (109 aa).

The Proton acceptor role is filled by E72. H101 functions as the Proton donor in the catalytic mechanism.

The protein belongs to the ribonuclease N1/T1 family.

The protein resides in the secreted. Functionally, hydrolyzes phosphodiester bonds in RNA, poly- and oligoribonucleotides resulting in 3'-nucleoside monophosphates via 2',3'-cyclophosphate intermediates. The sequence is that of Ribonuclease from Heyndrickxia coagulans (Weizmannia coagulans).